Consider the following 154-residue polypeptide: Putative antiporter subunit mnhG2 (154 aa).

Helical transmembrane passes span 11–31 (IASI…IGIV), 51–71 (VLLT…FFSV), and 72–92 (RLLL…HLIS).

This sequence belongs to the CPA3 antiporters (TC 2.A.63) subunit G family. In terms of assembly, may form a heterooligomeric complex that consists of seven subunits: mnhA2, mnhB2, mnhC2, mnhD2, mnhE2, mnhF2 and mnhG2.

Its subcellular location is the cell membrane. This chain is Putative antiporter subunit mnhG2 (mnhG2), found in Staphylococcus epidermidis (strain ATCC 35984 / DSM 28319 / BCRC 17069 / CCUG 31568 / BM 3577 / RP62A).